Consider the following 615-residue polypeptide: Matrix metalloproteinase-25 (615 aa).

Residues 1–162 constitute a propeptide that is removed on maturation; it reads MCFPGSQISP…AAGLVRRRRR (162 aa). The helical transmembrane segment at 53–73 threads the bilayer; that stretch reads ILRLPAFGLPLLALLLVPLLP. A Cysteine switch motif is present at residues 143–150; that stretch reads PRCSLPDV. Zn(2+) is bound by residues C145 and H287. Residue E288 is part of the active site. Zn(2+)-binding residues include H291 and H297. The tract at residues 336-366 is disordered; the sequence is VSQNPNARPTRKPLVPPPQPPAMPPDSPATP. The span at 349 to 366 shows a compositional bias: pro residues; it reads LVPPPQPPAMPPDSPATP. Hemopexin repeat units follow at residues 368–417, 421–466, 467–515, and 516–562; these read PDRC…WEGL, VKVI…GLPP, GEDV…DGAP, and FAPD…WLDC. Residues C371 and C562 are joined by a disulfide bond. The disordered stretch occupies residues 547–582; it reads AESDSPQPIGPKWLDCPAPNSDPRVTSPPKTTSKTR. A lipid anchor (GPI-anchor amidated alanine) is attached at A593. The propeptide at 594-615 is removed in mature form; that stretch reads SEQLSPLLLPLLPLVAGEVFSY.

This sequence belongs to the peptidase M10A family. Zn(2+) serves as cofactor. The cofactor is Ca(2+). The precursor is cleaved by a furin endopeptidase.

The protein localises to the cell membrane. May activate progelatinase A. This Mus musculus (Mouse) protein is Matrix metalloproteinase-25 (Mmp25).